We begin with the raw amino-acid sequence, 252 residues long: tRNA pseudouridine synthase A (252 aa).

Aspartate 52 functions as the Nucleophile in the catalytic mechanism. Tyrosine 112 contacts substrate.

The protein belongs to the tRNA pseudouridine synthase TruA family. As to quaternary structure, homodimer.

The enzyme catalyses uridine(38/39/40) in tRNA = pseudouridine(38/39/40) in tRNA. Formation of pseudouridine at positions 38, 39 and 40 in the anticodon stem and loop of transfer RNAs. The protein is tRNA pseudouridine synthase A of Porphyromonas gingivalis (strain ATCC 33277 / DSM 20709 / CIP 103683 / JCM 12257 / NCTC 11834 / 2561).